The chain runs to 177 residues: Large ribosomal subunit protein uL6 (177 aa).

The protein belongs to the universal ribosomal protein uL6 family. As to quaternary structure, part of the 50S ribosomal subunit.

Its function is as follows. This protein binds to the 23S rRNA, and is important in its secondary structure. It is located near the subunit interface in the base of the L7/L12 stalk, and near the tRNA binding site of the peptidyltransferase center. In Aliivibrio fischeri (strain MJ11) (Vibrio fischeri), this protein is Large ribosomal subunit protein uL6.